The primary structure comprises 405 residues: Acetylornithine/succinyldiaminopimelate aminotransferase (405 aa).

Residues 107-108 (GA) and F140 each bind pyridoxal 5'-phosphate. Residue R143 participates in N(2)-acetyl-L-ornithine binding. 225-228 (DEVQ) serves as a coordination point for pyridoxal 5'-phosphate. The residue at position 254 (K254) is an N6-(pyridoxal phosphate)lysine. T282 contributes to the N(2)-acetyl-L-ornithine binding site. A pyridoxal 5'-phosphate-binding site is contributed by T283.

Belongs to the class-III pyridoxal-phosphate-dependent aminotransferase family. ArgD subfamily. As to quaternary structure, homodimer. It depends on pyridoxal 5'-phosphate as a cofactor.

It is found in the cytoplasm. The enzyme catalyses N(2)-acetyl-L-ornithine + 2-oxoglutarate = N-acetyl-L-glutamate 5-semialdehyde + L-glutamate. It carries out the reaction N-succinyl-(2S,6S)-2,6-diaminopimelate + 2-oxoglutarate = (S)-2-succinylamino-6-oxoheptanedioate + L-glutamate. The protein operates within amino-acid biosynthesis; L-arginine biosynthesis; N(2)-acetyl-L-ornithine from L-glutamate: step 4/4. It functions in the pathway amino-acid biosynthesis; L-lysine biosynthesis via DAP pathway; LL-2,6-diaminopimelate from (S)-tetrahydrodipicolinate (succinylase route): step 2/3. In terms of biological role, involved in both the arginine and lysine biosynthetic pathways. This chain is Acetylornithine/succinyldiaminopimelate aminotransferase, found in Yersinia pestis.